A 186-amino-acid polypeptide reads, in one-letter code: Ribosome-recycling factor (186 aa).

The protein belongs to the RRF family.

Its subcellular location is the cytoplasm. Its function is as follows. Responsible for the release of ribosomes from messenger RNA at the termination of protein biosynthesis. May increase the efficiency of translation by recycling ribosomes from one round of translation to another. The chain is Ribosome-recycling factor from Janthinobacterium sp. (strain Marseille) (Minibacterium massiliensis).